The chain runs to 89 residues: Small ribosomal subunit protein uS17 (89 aa).

This sequence belongs to the universal ribosomal protein uS17 family. In terms of assembly, part of the 30S ribosomal subunit.

In terms of biological role, one of the primary rRNA binding proteins, it binds specifically to the 5'-end of 16S ribosomal RNA. This Baumannia cicadellinicola subsp. Homalodisca coagulata protein is Small ribosomal subunit protein uS17.